We begin with the raw amino-acid sequence, 566 residues long: Probable cytochrome P450 519D1 (566 aa).

The chain crosses the membrane as a helical span at residues Met1–Lys21. The segment at Phe471–Lys491 is disordered. The segment covering Asn472 to Asn487 has biased composition (low complexity). Cys510 contributes to the heme binding site.

The protein belongs to the cytochrome P450 family. The cofactor is heme.

It is found in the membrane. The sequence is that of Probable cytochrome P450 519D1 (cyp519D1) from Dictyostelium discoideum (Social amoeba).